The following is a 287-amino-acid chain: Neuferricin homolog (287 aa).

The first 22 residues, 1–22 (MFGLLRHLFKFQFLFVVAAVLG), serve as a signal peptide directing secretion. A Cytochrome b5 heme-binding domain is found at 61–146 (GTLFTPAELA…KPDDLIGLAG (86 aa)). Residues 175–204 (YHHKFLELLEQARDAKRQVEELRARYPGCN) adopt a coiled-coil conformation.

Belongs to the cytochrome b5 family. MAPR subfamily.

The protein localises to the secreted. Its function is as follows. Heme-binding protein. The chain is Neuferricin homolog from Drosophila melanogaster (Fruit fly).